Here is a 155-residue protein sequence, read N- to C-terminus: Probable jacalin-related lectin 26 (155 aa).

Transmembrane regions (helical) follow at residues 26-48 (AYLY…IAMI) and 127-149 (VSFV…VLFL). Residues 47 to 155 (MIRAGSVGKK…VLFLMKFKRS (109 aa)) enclose the Jacalin-type lectin domain.

Belongs to the jacalin lectin family.

The protein resides in the membrane. This chain is Probable jacalin-related lectin 26 (JAL26), found in Arabidopsis thaliana (Mouse-ear cress).